We begin with the raw amino-acid sequence, 823 residues long: Nuclear factor I family protein (823 aa).

A disordered region spans residues 1-56 (MEPHLKIDVSSASGSTTTGATASTSEAPQDSQAQQTMPPPSSDWSNQFNSPEAVSP). Residues 10–25 (SSASGSTTTGATASTS) are compositionally biased toward low complexity. Over residues 26-52 (EAPQDSQAQQTMPPPSSDWSNQFNSPE) the composition is skewed to polar residues. The segment at residues 61-253 (IKCFSPYSQE…DVDTKITLTY (193 aa)) is a DNA-binding region (CTF/NF-I). Disordered regions lie at residues 364 to 408 (PYPI…NDEV), 433 to 468 (SRTQ…AFRS), and 777 to 823 (APPA…NEKK). Over residues 386–396 (PSEKRSRDISS) the composition is skewed to basic and acidic residues. A compositionally biased stretch (polar residues) spans 433–447 (SRTQQNQGAPGTSRQ). Positions 777–794 (APPACSPSSSNSSLGAAN) are enriched in low complexity.

It belongs to the CTF/NF-I family. As to expression, expressed in muscles, neurons and intestinal cells.

It localises to the nucleus. Functionally, probable transcription factor which recognizes and binds the palindromic sequence 5'-TTGGCANNNTGCCAA-3' present in promoters. Plays a role in locomotion, pharyngeal pumping, egg-laying, and life span. The sequence is that of Nuclear factor I family protein from Caenorhabditis elegans.